A 120-amino-acid polypeptide reads, in one-letter code: Ribonuclease P protein component (120 aa).

This sequence belongs to the RnpA family. Consists of a catalytic RNA component (M1 or rnpB) and a protein subunit.

It carries out the reaction Endonucleolytic cleavage of RNA, removing 5'-extranucleotides from tRNA precursor.. RNaseP catalyzes the removal of the 5'-leader sequence from pre-tRNA to produce the mature 5'-terminus. It can also cleave other RNA substrates such as 4.5S RNA. The protein component plays an auxiliary but essential role in vivo by binding to the 5'-leader sequence and broadening the substrate specificity of the ribozyme. The protein is Ribonuclease P protein component of Desulfotalea psychrophila (strain LSv54 / DSM 12343).